Consider the following 244-residue polypeptide: MLRVRDDLPPFLKNYLPDGHRNGRPFVTLTYAQSIDAKIAKQRGVRTTISHIETKEMTHYLRYFHDGILIGSGTVLADDPGLNCKWIGPNNDPDESMEEKSPRPIILDPKLKWKYSGSKMEELCNQGMGKPPIVITTKTPKVKEANVEYMIMEPDANDRISWKSILDTLRRNYDMKSVMIEGGSHVINQLLMCSDLIDSLIVTIGSIYLGSEGVTVSPPDEVKLKDISWWKGTSDVVMCSRLQN.

Residues Thr-74, Asp-78, Ile-160, and 183-187 contribute to the NADP(+) site; that span reads GSHVI.

This sequence belongs to the HTP reductase family. In terms of assembly, homodimer.

It carries out the reaction 2,5-diamino-6-(1-D-ribitylamino)pyrimidin-4(3H)-one 5'-phosphate + NADP(+) = 2,5-diamino-6-(1-D-ribosylamino)pyrimidin-4(3H)-one 5'-phosphate + NADPH + H(+). The enzyme catalyses 2,5-diamino-6-(1-D-ribitylamino)pyrimidin-4(3H)-one 5'-phosphate + NAD(+) = 2,5-diamino-6-(1-D-ribosylamino)pyrimidin-4(3H)-one 5'-phosphate + NADH + H(+). The protein operates within cofactor biosynthesis; riboflavin biosynthesis. Its function is as follows. Catalyzes an early step in riboflavin biosynthesis, the NADPH-dependent reduction of the ribose side chain of 2,5-diamino-6-ribosylamino-4(3H)-pyrimidinone 5'-phosphate, yielding 2,5-diamino-6-ribitylamino-4(3H)-pyrimidinone 5'-phosphate. This Candida glabrata (strain ATCC 2001 / BCRC 20586 / JCM 3761 / NBRC 0622 / NRRL Y-65 / CBS 138) (Yeast) protein is 2,5-diamino-6-ribosylamino-4(3H)-pyrimidinone 5'-phosphate reductase (RIB7).